Consider the following 784-residue polypeptide: PWWP domain-containing protein 2A (784 aa).

Low complexity predominate over residues 1-10; sequence MAAVAAAPGP. Disordered regions lie at residues 1-29, 399-443, 468-570, and 609-655; these read MAAVAAAPGPGEAGESEQDSKTTPGEWRL, DHKV…KTQL, EKAQ…EIQD, and SSAS…SKEE. A compositionally biased stretch (basic and acidic residues) spans 399-412; that stretch reads DHKVNGKGQHESQK. The span at 433–442 shows a compositional bias: polar residues; it reads PSQTSAAKTQ. The PWWP domain occupies 684–744; it reads VGDIVWAKIY…LSQLAPFLEN (61 aa).

Its subcellular location is the nucleus. In terms of biological role, H2A.Z-specific chromatin binding protein which plays an important role in the neural crest cell differentiation and/or migration during early development and is essential for the development of the head and eye. Acts as an adapter between distinct nucleosome components (H3K36me3 or H2A.Z) and chromatin-modifying complexes, contributing to the regulation of the levels of histone acetylation at actively transcribed genes. The chain is PWWP domain-containing protein 2A (pwwp2a) from Xenopus laevis (African clawed frog).